A 227-amino-acid chain; its full sequence is Transcription antitermination protein NusB (227 aa).

2 disordered regions span residues 165-189 (ASES…SDED) and 201-227 (AEET…ADES). 2 stretches are compositionally biased toward acidic residues: residues 178–189 (DDSDALDDSDED) and 201–214 (AEET…AEDS). A compositionally biased stretch (basic and acidic residues) spans 215 to 227 (EVSKVSEEKADES).

This sequence belongs to the NusB family.

Involved in transcription antitermination. Required for transcription of ribosomal RNA (rRNA) genes. Binds specifically to the boxA antiterminator sequence of the ribosomal RNA (rrn) operons. The polypeptide is Transcription antitermination protein NusB (Corynebacterium glutamicum (strain ATCC 13032 / DSM 20300 / JCM 1318 / BCRC 11384 / CCUG 27702 / LMG 3730 / NBRC 12168 / NCIMB 10025 / NRRL B-2784 / 534)).